Reading from the N-terminus, the 397-residue chain is Acetate kinase 2 (397 aa).

Asn-10 is a Mg(2+) binding site. Residue Lys-17 participates in ATP binding. Position 90 (Arg-90) interacts with substrate. Asp-147 (proton donor/acceptor) is an active-site residue. ATP is bound by residues 207 to 211, 281 to 283, and 329 to 333; these read HLGNG, DCR, and GIGEN. Mg(2+) is bound at residue Glu-383.

The protein belongs to the acetokinase family. In terms of assembly, homodimer. Mg(2+) is required as a cofactor. It depends on Mn(2+) as a cofactor.

Its subcellular location is the cytoplasm. It catalyses the reaction acetate + ATP = acetyl phosphate + ADP. It functions in the pathway metabolic intermediate biosynthesis; acetyl-CoA biosynthesis; acetyl-CoA from acetate: step 1/2. Functionally, catalyzes the formation of acetyl phosphate from acetate and ATP. Can also catalyze the reverse reaction. This is Acetate kinase 2 from Photobacterium profundum (strain SS9).